The sequence spans 242 residues: MSKRRIAPLTFLRRLLLRILAALAVFWGGGIALFSVVPVPFSAVMAERQISAWLSGEFGYVAHSDWVSMADISPWMGLAVIAAEDQKFPEHWGFDVPAIEKALAHNERNESRIRGASTLSQQTAKNLFLWDGRSWVRKGLEAGLTLGIETVWSKKRILTVYLNIAEFGDGIFGVEAAAQRYFHKPASRLSVSEAALLAAVLPNPLRYKANAPSGYVRSRQAWIMRQMRQLGGESFMTRNQLN.

Residues 19–39 (ILAALAVFWGGGIALFSVVPV) form a helical membrane-spanning segment.

Belongs to the glycosyltransferase 51 family.

Its subcellular location is the cell inner membrane. The catalysed reaction is [GlcNAc-(1-&gt;4)-Mur2Ac(oyl-L-Ala-gamma-D-Glu-L-Lys-D-Ala-D-Ala)](n)-di-trans,octa-cis-undecaprenyl diphosphate + beta-D-GlcNAc-(1-&gt;4)-Mur2Ac(oyl-L-Ala-gamma-D-Glu-L-Lys-D-Ala-D-Ala)-di-trans,octa-cis-undecaprenyl diphosphate = [GlcNAc-(1-&gt;4)-Mur2Ac(oyl-L-Ala-gamma-D-Glu-L-Lys-D-Ala-D-Ala)](n+1)-di-trans,octa-cis-undecaprenyl diphosphate + di-trans,octa-cis-undecaprenyl diphosphate + H(+). The protein operates within cell wall biogenesis; peptidoglycan biosynthesis. Its function is as follows. Peptidoglycan polymerase that catalyzes glycan chain elongation from lipid-linked precursors. The protein is Biosynthetic peptidoglycan transglycosylase of Salmonella paratyphi B (strain ATCC BAA-1250 / SPB7).